The sequence spans 555 residues: Urocanate hydratase (555 aa).

Residues 52–53, glutamine 130, 176–178, glutamate 196, arginine 201, 242–243, 263–267, 273–274, and tyrosine 322 contribute to the NAD(+) site; these read GG, GMG, NA, QTSAH, and YL. Residue cysteine 410 is part of the active site. Glycine 492 provides a ligand contact to NAD(+).

Belongs to the urocanase family. NAD(+) is required as a cofactor.

The protein localises to the cytoplasm. The catalysed reaction is 4-imidazolone-5-propanoate = trans-urocanate + H2O. The protein operates within amino-acid degradation; L-histidine degradation into L-glutamate; N-formimidoyl-L-glutamate from L-histidine: step 2/3. Functionally, catalyzes the conversion of urocanate to 4-imidazolone-5-propionate. The sequence is that of Urocanate hydratase from Shewanella sp. (strain W3-18-1).